The sequence spans 81 residues: Saposin-C (81 aa).

Positions 1-81 (ESVTCKACEY…CSELGLCMSG (81 aa)) constitute a Saposin B-type domain. 3 disulfides stabilise this stretch: cysteine 5–cysteine 78, cysteine 8–cysteine 72, and cysteine 36–cysteine 47. The N-linked (GlcNAc...) asparagine glycan is linked to asparagine 22.

Saposin-A and saposin-C stimulate the hydrolysis of glucosylceramide by beta-glucosylceramidase (EC 3.2.1.45) and galactosylceramide by beta-galactosylceramidase (EC 3.2.1.46). Saposin-C apparently acts by combining with the enzyme and acidic lipid to form an activated complex, rather than by solubilizing the substrate. In Cavia porcellus (Guinea pig), this protein is Saposin-C (PSAP).